Here is a 317-residue protein sequence, read N- to C-terminus: MAASILPFEKPVAELIEKVRELRALAAADPRFEPELAQLEDNTGRLAREIFAGLTPMQKVLLSRHANRPYTLDYIKRLFTDWVELKGDRRFADDCSIVGGLATYHGRSVVVVGHQKGRGAKENVKRNFGMPHPEGYRKAIRLYEMADRFGLPILTFIDTMGAYPGIGAEERGQSEAIGAALAAMARVGVPIVATVIGEGGSGGALALGVANRVLVLEFSCYSVISPEGCAAILWKDGSRADEAAARLKITAPDLLQLGVVDTIVEEPTGGAHQDHDDAAARLDKALWATLTSMDGLGPEELVDDRYRRFRGLGSFVG.

The region spanning 31-292 is the CoA carboxyltransferase C-terminal domain; sequence RFEPELAQLE…DKALWATLTS (262 aa).

This sequence belongs to the AccA family. Acetyl-CoA carboxylase is a heterohexamer composed of biotin carboxyl carrier protein (AccB), biotin carboxylase (AccC) and two subunits each of ACCase subunit alpha (AccA) and ACCase subunit beta (AccD).

The protein resides in the cytoplasm. The catalysed reaction is N(6)-carboxybiotinyl-L-lysyl-[protein] + acetyl-CoA = N(6)-biotinyl-L-lysyl-[protein] + malonyl-CoA. The protein operates within lipid metabolism; malonyl-CoA biosynthesis; malonyl-CoA from acetyl-CoA: step 1/1. Functionally, component of the acetyl coenzyme A carboxylase (ACC) complex. First, biotin carboxylase catalyzes the carboxylation of biotin on its carrier protein (BCCP) and then the CO(2) group is transferred by the carboxyltransferase to acetyl-CoA to form malonyl-CoA. The polypeptide is Acetyl-coenzyme A carboxylase carboxyl transferase subunit alpha (Sorangium cellulosum (strain So ce56) (Polyangium cellulosum (strain So ce56))).